A 174-amino-acid polypeptide reads, in one-letter code: Small ribosomal subunit protein uS5 (174 aa).

The S5 DRBM domain maps to 19-82 (LREKMIAVNR…EQARRGMFKV (64 aa)).

It belongs to the universal ribosomal protein uS5 family. In terms of assembly, part of the 30S ribosomal subunit. Contacts proteins S4 and S8.

In terms of biological role, with S4 and S12 plays an important role in translational accuracy. Functionally, located at the back of the 30S subunit body where it stabilizes the conformation of the head with respect to the body. The polypeptide is Small ribosomal subunit protein uS5 (Bordetella bronchiseptica (strain ATCC BAA-588 / NCTC 13252 / RB50) (Alcaligenes bronchisepticus)).